The chain runs to 187 residues: Elongation factor P (187 aa).

This sequence belongs to the elongation factor P family.

Its subcellular location is the cytoplasm. It functions in the pathway protein biosynthesis; polypeptide chain elongation. Functionally, involved in peptide bond synthesis. Stimulates efficient translation and peptide-bond synthesis on native or reconstituted 70S ribosomes in vitro. Probably functions indirectly by altering the affinity of the ribosome for aminoacyl-tRNA, thus increasing their reactivity as acceptors for peptidyl transferase. The chain is Elongation factor P from Syntrophus aciditrophicus (strain SB).